We begin with the raw amino-acid sequence, 295 residues long: Mediator of RNA polymerase II transcription subunit 27 (295 aa).

The protein belongs to the Mediator complex subunit 27 family. In terms of assembly, component of the Mediator complex.

It localises to the nucleus. In terms of biological role, component of the Mediator complex, a coactivator involved in the regulated transcription of nearly all RNA polymerase II-dependent genes. Mediator functions as a bridge to convey information from gene-specific regulatory proteins to the basal RNA polymerase II transcription machinery. Mediator is recruited to promoters by direct interactions with regulatory proteins and serves as a scaffold for the assembly of a functional preinitiation complex with RNA polymerase II and the general transcription factors. This chain is Mediator of RNA polymerase II transcription subunit 27 (MED27), found in Anopheles gambiae (African malaria mosquito).